The chain runs to 808 residues: Spindle assembly abnormal protein 4 (808 aa).

A disordered region spans residues 1 to 151 (MASDENIGAD…PDEPSTLVNS (151 aa)). The span at 42–54 (PPTSELSSASSPS) shows a compositional bias: low complexity. Composition is skewed to polar residues over residues 61 to 78 (SLSNALPNSARTVDSGIS) and 85 to 104 (PPTTASLPMDQPSLSSSPEN). The span at 113–123 (AEEHGHSGQHA) shows a compositional bias: basic and acidic residues. Residues 124–133 (EEEEDNDTDE) are compositionally biased toward acidic residues. A coiled-coil region spans residues 161–181 (KYKNAAAEFKAFERRMDSMRS). 2 disordered regions span residues 187–206 (TSLATPSSCAPSNSSEPPTR) and 271–298 (VTAPLRRNDMMNSSRQNPQNGNVQDENR). Polar residues predominate over residues 280–294 (MMNSSRQNPQNGNVQ). Positions 314-503 (LDRQKLEIEI…ERDDKEKEMF (190 aa)) form a coiled coil. The segment covering 511 to 529 (KTSNPVPPVLNQSVPISIT) has biased composition (polar residues). The tract at residues 511–564 (KTSNPVPPVLNQSVPISITSNGPSRHPSSSSLTTFRKPSTSNRERGVSWADEPN) is disordered. Positions 530–541 (SNGPSRHPSSSS) are enriched in low complexity. The segment covering 542 to 551 (LTTFRKPSTS) has biased composition (polar residues).

In terms of assembly, interacts with hyls-1; leading to hyls-1 localization into newly forming centrioles.

It is found in the cytoplasm. Its subcellular location is the cytoskeleton. The protein localises to the microtubule organizing center. It localises to the centrosome. Its function is as follows. Required for centrosome duplication. Plays a central role in determining centrosome size. The protein is Spindle assembly abnormal protein 4 (sas-4) of Caenorhabditis elegans.